Consider the following 303-residue polypeptide: Coenzyme PQQ synthesis protein B (303 aa).

It belongs to the PqqB family.

Its pathway is cofactor biosynthesis; pyrroloquinoline quinone biosynthesis. In terms of biological role, may be involved in the transport of PQQ or its precursor to the periplasm. In Pseudomonas entomophila (strain L48), this protein is Coenzyme PQQ synthesis protein B.